The following is a 1356-amino-acid chain: MQSKVLLAVALWLCVETRAASVGLPSVSLDLPRLSIQKDILTIKANTTLQITCRGQRDLDWLWPNNQSGSEQRVEVTECSDGLFCKTLTIPKVIGNDTGAYKCFYRETDLASVIYVYVQDYRSPFIASVSDQHGVVYITENKNKTVVIPCLGSISNLNVSLCARYPEKRFVPDGNRISWDSKKGFTIPSYMISYAGMVFCEAKINDESYQSIMYIVVVVGYRIYDVVLSPSHGIELSVGEKLVLNCTARTELNVGIDFNWEYPSSKHQHKKLVNRDLKTQSGSEMKKFLSTLTIDGVTRSDQGLYTCAASSGLMTKKNSTFVRVHEKPFVAFGSGMESLVEATVGERVRIPAKYLGYPPPEIKWYKNGIPLESNHTIKAGHVLTIMEVSERDTGNYTVILTNPISKEKQSHVVSLVVYVPPQIGEKSLISPVDSYQYGTTQTLTCTVYAIPPPHHIHWYWQLEEECANEPSQAVSVTNPYPCEEWRSVEDFQGGNKIEVNKNQFALIEGKNKTVSTLVIQAANVSALYKCEAVNKVGRGERVISFHVTRGPEITLQPDMQPTEQESVSLWCTADRSTFENLTWYKLGPQPLPIHVGELPTPVCKNLDTLWKLNATMFSNSTNDILIMELKNASLQDQGDYVCLAQDRKTKKRHCVVRQLTVLERVAPTITGNLENQTTSIGESIEVSCTASGNPPPQIMWFKDNETLVEDSGIVLKDGNRNLTIRRVRKEDEGLYTCQACSVLGCAKVEAFFIIEGAQEKTNLEIIILVGTAVIAMFFWLLLVIILRTVKRANGGELKTGYLSIVMDPDELPLDEHCERLPYDASKWEFPRDRLKLGKPLGRGAFGQVIEADAFGIDKTATCRTVAVKMLKEGATHSEHRALMSELKILIHIGHHLNVVNLLGACTKPGGPLMVIVEFCKFGNLSTYLRSKRNEFVPYKTKGARFRQGKDYVGAIPVDLKRRLDSITSSQSSASSGFVEEKSLSDVEEEEAPEDLYKDFLTLEHLICYSFQVAKGMEFLASRKCIHRDLAARNILLSEKNVVKICDFGLARDIYKDPDYVRKGDARLPLKWMAPETIFDRVYTIQSDVWSFGVLLWEIFSLGASPYPGVKIDEEFCRRLKEGTRMRAPDYTTPEMYQTMLDCWHGEPSQRPTFSELVEHLGNLLQANAQQDGKDYIVLPISETLSMEEDSGLSLPTSPVSCMEEEEVCDPKFHYDNTAGISQYLQNSKRKSRPVSVKTFEDIPLEEPEVKVIPDDNQTDSGMVLASEELKTLEDRTKLSPSFGGMVPSKSRESVASEGSNQTSGYQSGYHSDDTDTTVYSSEEAELLKLIEIGVQTGSTAQILQPDSGTTLSSPPV.

The N-terminal stretch at 1 to 19 (MQSKVLLAVALWLCVETRA) is a signal peptide. Residues 20–764 (ASVGLPSVSL…EGAQEKTNLE (745 aa)) lie on the Extracellular side of the membrane. 6 N-linked (GlcNAc...) asparagine glycosylation sites follow: Asn46, Asn66, Asn96, Asn143, Asn158, and Asn245. 7 Ig-like C2-type domains span residues 46–110 (NTTL…ETDL), 141–207 (NKNK…INDE), 224–320 (YDVV…KNST), 328–414 (PFVA…HVVS), 421–548 (PQIG…FHVT), 551–660 (PEIT…RQLT), and 667–753 (PTIT…AFFI). Residues Cys53 and Cys103 are joined by a disulfide bond. Cys150 and Cys200 form a disulfide bridge. An intrachain disulfide couples Cys246 to Cys307. Asn318, Asn374, Asn395, Asn511, Asn523, Asn580, Asn613, Asn619, Asn631, Asn675, Asn704, and Asn721 each carry an N-linked (GlcNAc...) asparagine glycan. Intrachain disulfides connect Cys445–Cys530 and Cys571–Cys642. A disulfide bond links Cys688 and Cys737. The chain crosses the membrane as a helical span at residues 765–785 (IIILVGTAVIAMFFWLLLVII). Over 786 to 1356 (LRTVKRANGG…SGTTLSSPPV (571 aa)) the chain is Cytoplasmic. At Tyr801 the chain carries Phosphotyrosine. One can recognise a Protein kinase domain in the interval 834-1162 (LKLGKPLGRG…FSELVEHLGN (329 aa)). ATP contacts are provided by residues 840–848 (LGRGAFGQV) and Lys868. A Phosphotyrosine; by autocatalysis modification is found at Tyr951. Phosphoserine occurs at positions 982 and 984. Tyr996 is subject to Phosphotyrosine; by autocatalysis. Cys1024 and Cys1045 form a disulfide bridge. Asp1028 functions as the Proton acceptor in the catalytic mechanism. 4 positions are modified to phosphotyrosine; by autocatalysis: Tyr1054, Tyr1059, Tyr1175, and Tyr1214. A phosphoserine mark is found at Ser1231 and Ser1235. Thr1238 is modified (phosphothreonine). The interval 1274-1318 (DRTKLSPSFGGMVPSKSRESVASEGSNQTSGYQSGYHSDDTDTTV) is disordered. Residues 1296–1309 (SEGSNQTSGYQSGY) are compositionally biased toward polar residues. Phosphotyrosine; by autocatalysis occurs at positions 1305, 1309, and 1319.

It belongs to the protein kinase superfamily. Tyr protein kinase family. CSF-1/PDGF receptor subfamily. Homodimer in the presence of bound dimeric VEGFA, VEGFC or VEGFD ligands; monomeric in the absence of bound ligands. Can also form heterodimers with FLT1/VEGFR1 and KDR/VEGFR2. Interacts (tyrosine phosphorylated) with LFYN, NCK1, PLCG1. Interacts (tyrosine-phosphorylated active form preferentially) with DAB2IP (via C2 domain and active form preferentially); the interaction occurs at the late phase of VEGFA response and inhibits KDR/VEGFR2 activity. Interacts with SHBSH2D2A/TSAD, GRB2, MYOF, CBL and PDCD6. Interacts (via C-terminus domain) with ERN1 (via kinase domain); the interaction is facilitated in a XBP1 isoform 1- and vascular endothelial growth factor (VEGF)-dependent manner in endothelial cells. Interacts (via juxtamembrane region) with chaperone PDCL3 (via thioredoxin fold region); the interaction leads to increased KDR/VEGFR2 abundance through inhibition of its ubiquitination and degradation. Interacts (tyrosine phosphorylated) with CCDC88A/GIV (via SH2-like region); binding requires autophosphorylation of the KDR/VEGFR2 C-terminal region. Interacts with isoform 2 of BSG. Interacts with SLC31A1; this interaction is induced upon VEGFA stimulation leading to SLC31A1 and KDR subsequent co-internalization to early endosomes, thereby activating KDR downstream signaling in endothelial cells. In terms of assembly, (Microbial infection) Interacts with HIV-1 Tat. In terms of processing, N-glycosylated. Post-translationally, ubiquitinated. Tyrosine phosphorylation of the receptor promotes its poly-ubiquitination, leading to its degradation via the proteasome or lysosomal proteases. Autophosphorylated on tyrosine residues upon ligand binding. Autophosphorylation occurs in trans, i.e. one subunit of the dimeric receptor phosphorylates tyrosine residues on the other subunit. Phosphorylation at Tyr-951 is important for interaction with SH2D2A/TSAD and VEGFA-mediated reorganization of the actin cytoskeleton. Phosphorylation at Tyr-1175 is important for interaction with PLCG1 and SHB. Phosphorylation at Tyr-1214 is important for interaction with NCK1 and FYN. Dephosphorylated by PTPRB. Dephosphorylated by PTPRJ at Tyr-951, Tyr-996, Tyr-1054, Tyr-1059, Tyr-1175 and Tyr-1214. In terms of processing, the inhibitory disulfide bond between Cys-1024 and Cys-1045 may serve as a specific molecular switch for H(2)S-induced modification that regulates KDR/VEGFR2 function. Detected in cornea (at protein level). Widely expressed.

It localises to the cell junction. The protein resides in the endoplasmic reticulum. It is found in the cell membrane. The protein localises to the cytoplasm. Its subcellular location is the nucleus. It localises to the cytoplasmic vesicle. The protein resides in the early endosome. It is found in the secreted. It catalyses the reaction L-tyrosyl-[protein] + ATP = O-phospho-L-tyrosyl-[protein] + ADP + H(+). With respect to regulation, present in an inactive conformation in the absence of bound ligand. Binding of VEGFA, VEGFC or VEGFD leads to dimerization and activation by autophosphorylation on tyrosine residues. Inhibited by the small molecule PTK inhibitor SU5614 ((3Z)-5-Chloro-3-[(3,5-dimethyl-1H-pyrrol-2-yl)methylene]-1,3-dihydro-2H-indol-2-one). May be regulated by hydrogen sulfide (H(2)S) levels via a H(2)S-sensitive intracellular disulfide bond. Tyrosine-protein kinase that acts as a cell-surface receptor for VEGFA, VEGFC and VEGFD. Plays an essential role in the regulation of angiogenesis, vascular development, vascular permeability, and embryonic hematopoiesis. Promotes proliferation, survival, migration and differentiation of endothelial cells. Promotes reorganization of the actin cytoskeleton. Isoforms lacking a transmembrane domain, such as isoform 2 and isoform 3, may function as decoy receptors for VEGFA, VEGFC and/or VEGFD. Isoform 2 plays an important role as negative regulator of VEGFA- and VEGFC-mediated lymphangiogenesis by limiting the amount of free VEGFA and/or VEGFC and preventing their binding to FLT4. Modulates FLT1 and FLT4 signaling by forming heterodimers. Binding of vascular growth factors to isoform 1 leads to the activation of several signaling cascades. Activation of PLCG1 leads to the production of the cellular signaling molecules diacylglycerol and inositol 1,4,5-trisphosphate and the activation of protein kinase C. Mediates activation of MAPK1/ERK2, MAPK3/ERK1 and the MAP kinase signaling pathway, as well as of the AKT1 signaling pathway. Mediates phosphorylation of PIK3R1, the regulatory subunit of phosphatidylinositol 3-kinase, reorganization of the actin cytoskeleton and activation of PTK2/FAK1. Required for VEGFA-mediated induction of NOS2 and NOS3, leading to the production of the signaling molecule nitric oxide (NO) by endothelial cells. Phosphorylates PLCG1. Promotes phosphorylation of FYN, NCK1, NOS3, PIK3R1, PTK2/FAK1 and SRC. The sequence is that of Vascular endothelial growth factor receptor 2 from Homo sapiens (Human).